The primary structure comprises 571 residues: Proline--tRNA ligase (571 aa).

This sequence belongs to the class-II aminoacyl-tRNA synthetase family. ProS type 1 subfamily. As to quaternary structure, homodimer.

It localises to the cytoplasm. It carries out the reaction tRNA(Pro) + L-proline + ATP = L-prolyl-tRNA(Pro) + AMP + diphosphate. Functionally, catalyzes the attachment of proline to tRNA(Pro) in a two-step reaction: proline is first activated by ATP to form Pro-AMP and then transferred to the acceptor end of tRNA(Pro). As ProRS can inadvertently accommodate and process non-cognate amino acids such as alanine and cysteine, to avoid such errors it has two additional distinct editing activities against alanine. One activity is designated as 'pretransfer' editing and involves the tRNA(Pro)-independent hydrolysis of activated Ala-AMP. The other activity is designated 'posttransfer' editing and involves deacylation of mischarged Ala-tRNA(Pro). The misacylated Cys-tRNA(Pro) is not edited by ProRS. In Shewanella baltica (strain OS155 / ATCC BAA-1091), this protein is Proline--tRNA ligase.